The following is a 430-amino-acid chain: Tol-Pal system protein TolB (430 aa).

The first 21 residues, 1-21, serve as a signal peptide directing secretion; the sequence is MKQALRVAFGFLILWASVLHA.

Belongs to the TolB family. The Tol-Pal system is composed of five core proteins: the inner membrane proteins TolA, TolQ and TolR, the periplasmic protein TolB and the outer membrane protein Pal. They form a network linking the inner and outer membranes and the peptidoglycan layer.

It is found in the periplasm. Functionally, part of the Tol-Pal system, which plays a role in outer membrane invagination during cell division and is important for maintaining outer membrane integrity. TolB occupies a key intermediary position in the Tol-Pal system because it communicates directly with both membrane-embedded components, Pal in the outer membrane and TolA in the inner membrane. The protein is Tol-Pal system protein TolB of Escherichia coli O139:H28 (strain E24377A / ETEC).